The chain runs to 358 residues: Phospho-N-acetylmuramoyl-pentapeptide-transferase (358 aa).

The next 10 helical transmembrane spans lie at 28-48 (AALM…ITWL), 70-90 (TPTM…LLWA), 92-112 (LTNI…AVGF), 133-153 (MGGQ…NPDY), 165-185 (VTFD…VAAS), 196-216 (GLAI…IYIT), 233-253 (VGEV…FLWF), 260-280 (VFMG…LALL), 285-305 (LVLA…IVQV), and 335-355 (KIII…LSVL).

The protein belongs to the glycosyltransferase 4 family. MraY subfamily. Mg(2+) serves as cofactor.

The protein localises to the cell inner membrane. The enzyme catalyses UDP-N-acetyl-alpha-D-muramoyl-L-alanyl-gamma-D-glutamyl-meso-2,6-diaminopimeloyl-D-alanyl-D-alanine + di-trans,octa-cis-undecaprenyl phosphate = di-trans,octa-cis-undecaprenyl diphospho-N-acetyl-alpha-D-muramoyl-L-alanyl-D-glutamyl-meso-2,6-diaminopimeloyl-D-alanyl-D-alanine + UMP. It functions in the pathway cell wall biogenesis; peptidoglycan biosynthesis. Its function is as follows. Catalyzes the initial step of the lipid cycle reactions in the biosynthesis of the cell wall peptidoglycan: transfers peptidoglycan precursor phospho-MurNAc-pentapeptide from UDP-MurNAc-pentapeptide onto the lipid carrier undecaprenyl phosphate, yielding undecaprenyl-pyrophosphoryl-MurNAc-pentapeptide, known as lipid I. The polypeptide is Phospho-N-acetylmuramoyl-pentapeptide-transferase (Desulfovibrio desulfuricans (strain ATCC 27774 / DSM 6949 / MB)).